Consider the following 251-residue polypeptide: Small ribosomal subunit protein uS2 (251 aa).

It belongs to the universal ribosomal protein uS2 family.

The polypeptide is Small ribosomal subunit protein uS2 (Azoarcus sp. (strain BH72)).